Reading from the N-terminus, the 244-residue chain is Ureidoacrylate amidohydrolase RutB (244 aa).

D38 (proton acceptor) is an active-site residue. K147 is an active-site residue. C180 serves as the catalytic Nucleophile.

This sequence belongs to the isochorismatase family. RutB subfamily.

The catalysed reaction is (Z)-3-ureidoacrylate + H2O + H(+) = (Z)-3-aminoacrylate + NH4(+) + CO2. It carries out the reaction (Z)-3-ureidoacrylate + H2O = (Z)-3-aminoacrylate + carbamate + H(+). The enzyme catalyses (Z)-2-methylureidoacrylate + H2O + H(+) = (Z)-2-methylaminoacrylate + NH4(+) + CO2. Its function is as follows. Hydrolyzes ureidoacrylate to form aminoacrylate and carbamate. The carbamate hydrolyzes spontaneously, thereby releasing one of the nitrogen atoms of the pyrimidine ring as ammonia and one of its carbon atoms as CO2. This Escherichia coli O55:H7 (strain CB9615 / EPEC) protein is Ureidoacrylate amidohydrolase RutB.